A 354-amino-acid polypeptide reads, in one-letter code: Putative cinnamyl alcohol dehydrogenase 4 (354 aa).

Cysteine 47, histidine 69, glutamate 70, cysteine 100, cysteine 103, cysteine 106, cysteine 114, and cysteine 163 together coordinate Zn(2+). NADP(+) contacts are provided by residues threonine 167, 188–193 (GLGGLG), 211–216 (STSESK), threonine 251, and 297–299 (SVT).

Belongs to the zinc-containing alcohol dehydrogenase family. As to quaternary structure, homodimer. Zn(2+) serves as cofactor.

The catalysed reaction is (E)-cinnamyl alcohol + NADP(+) = (E)-cinnamaldehyde + NADPH + H(+). It carries out the reaction (E)-coniferol + NADP(+) = (E)-coniferaldehyde + NADPH + H(+). The enzyme catalyses (E)-sinapyl alcohol + NADP(+) = (E)-sinapaldehyde + NADPH + H(+). It catalyses the reaction (E)-4-coumaroyl alcohol + NADP(+) = (E)-4-coumaraldehyde + NADPH + H(+). The catalysed reaction is (E)-caffeyl alcohol + NADP(+) = (E)-caffeyl aldehyde + NADPH + H(+). The protein operates within aromatic compound metabolism; phenylpropanoid biosynthesis. Functionally, involved in lignin biosynthesis. Catalyzes the final step specific for the production of lignin monomers. Catalyzes the NADPH-dependent reduction of coniferaldehyde, 5-hydroxyconiferaldehyde, sinapaldehyde, 4-coumaraldehyde and caffeyl aldehyde to their respective alcohols. In Oryza sativa subsp. japonica (Rice), this protein is Putative cinnamyl alcohol dehydrogenase 4.